Reading from the N-terminus, the 392-residue chain is GTPase Obg (392 aa).

An Obg domain is found at 1-159 (MKFVDEATIK…RELRLELLLL (159 aa)). Residues 160–333 (ADVGMLGLPN…VCNELSDFMD (174 aa)) form the OBG-type G domain. Residues 166 to 173 (GLPNAGKS), 191 to 195 (FTTLI), 213 to 216 (DIPG), 283 to 286 (NKTD), and 314 to 316 (AAV) contribute to the GTP site. Positions 173 and 193 each coordinate Mg(2+). Positions 364–392 (GKNVVTEDGDDDDDWDDEEDDGHVIYARD) are disordered. Acidic residues predominate over residues 370–384 (EDGDDDDDWDDEEDD).

The protein belongs to the TRAFAC class OBG-HflX-like GTPase superfamily. OBG GTPase family. As to quaternary structure, monomer. Mg(2+) serves as cofactor.

The protein localises to the cytoplasm. In terms of biological role, an essential GTPase which binds GTP, GDP and possibly (p)ppGpp with moderate affinity, with high nucleotide exchange rates and a fairly low GTP hydrolysis rate. Plays a role in control of the cell cycle, stress response, ribosome biogenesis and in those bacteria that undergo differentiation, in morphogenesis control. In Aliivibrio salmonicida (strain LFI1238) (Vibrio salmonicida (strain LFI1238)), this protein is GTPase Obg.